The sequence spans 313 residues: Ribosomal protein L11 methyltransferase (313 aa).

Residues Thr164, Gly185, Asp207, and Asn249 each coordinate S-adenosyl-L-methionine.

Belongs to the methyltransferase superfamily. PrmA family.

It localises to the cytoplasm. The enzyme catalyses L-lysyl-[protein] + 3 S-adenosyl-L-methionine = N(6),N(6),N(6)-trimethyl-L-lysyl-[protein] + 3 S-adenosyl-L-homocysteine + 3 H(+). In terms of biological role, methylates ribosomal protein L11. In Clostridium botulinum (strain Eklund 17B / Type B), this protein is Ribosomal protein L11 methyltransferase.